Reading from the N-terminus, the 419-residue chain is Histidine--tRNA ligase (419 aa).

The protein belongs to the class-II aminoacyl-tRNA synthetase family.

It localises to the cytoplasm. The enzyme catalyses tRNA(His) + L-histidine + ATP = L-histidyl-tRNA(His) + AMP + diphosphate + H(+). In Pyrobaculum arsenaticum (strain DSM 13514 / JCM 11321 / PZ6), this protein is Histidine--tRNA ligase.